The following is a 555-amino-acid chain: Spermine oxidase (555 aa).

FAD-binding positions include Ala35, Glu55, Arg63, 79–80, and Val261; that span reads TW. Residues 271–307 form a disordered region; the sequence is AHPRGPEIEPRGEGDHNHDTGEGGQSGENPQQGRWDE. The segment covering 274 to 291 has biased composition (basic and acidic residues); the sequence is RGPEIEPRGEGDHNHDTG. Residues Glu519 and 528–529 contribute to the FAD site; that span reads TT.

Belongs to the flavin monoamine oxidase family. Requires FAD as cofactor. As to expression, widely expressed. Isoform 1 and isoform 2 are expressed at higher level in brain and skeletal muscle. Isoform 7 is found in brain and spleen, isoform 10 is widely expressed but found at lower level in heart, kidney, liver and lung.

It is found in the cytoplasm. The protein resides in the nucleus. The catalysed reaction is spermine + O2 + H2O = 3-aminopropanal + spermidine + H2O2. Its pathway is amine and polyamine degradation; spermine degradation. Flavoenzyme which catalyzes the oxidation of spermine to spermidine. Can also use N(1)-acetylspermine and spermidine as substrates, with different affinity depending on the isoform (isozyme) and on the experimental conditions. Plays an important role in the regulation of polyamine intracellular concentration and has the potential to act as a determinant of cellular sensitivity to the antitumor polyamine analogs. May contribute to beta-alanine production via aldehyde dehydrogenase conversion of 3-amino-propanal. This is Spermine oxidase (Smox) from Mus musculus (Mouse).